Reading from the N-terminus, the 294-residue chain is Proline iminopeptidase (294 aa).

In terms of domain architecture, AB hydrolase-1 spans Pro28–Glu278. Catalysis depends on Ser106, which acts as the Nucleophile. Asp245 is an active-site residue. Residue His272 is the Proton donor of the active site.

The protein belongs to the peptidase S33 family. In terms of assembly, homotrimer.

It localises to the cell envelope. It catalyses the reaction Release of N-terminal proline from a peptide.. Inhibited by 3,4-DCI, but no significant effect on enzyme activity by pepstatin A, E-64, 1,10-phenanthroline or EDTA. Functionally, releases the N-terminal proline from various substrates. Cleaves Pro-betaNA (L-prolyl-beta-naphthylamide) effectively. This is Proline iminopeptidase (pip) from Lactobacillus delbrueckii subsp. lactis.